The following is a 661-amino-acid chain: Transketolase (661 aa).

The residue at position 2 (S2) is an N-acetylserine. H31 contacts substrate. Residues H71 and 119–121 (GPL) contribute to the thiamine diphosphate site. D160 contributes to the Mg(2+) binding site. Thiamine diphosphate-binding residues include G161 and N190. Positions 190 and 192 each coordinate Mg(2+). Positions 267, 359, and 386 each coordinate substrate. H267 contacts thiamine diphosphate. Residue E413 is the Proton donor of the active site. Residue F439 participates in thiamine diphosphate binding. Substrate contacts are provided by H463, D471, and R522.

It belongs to the transketolase family. As to quaternary structure, homodimer. Mg(2+) serves as cofactor. Ca(2+) is required as a cofactor. Requires Mn(2+) as cofactor. The cofactor is Co(2+). It depends on thiamine diphosphate as a cofactor.

The catalysed reaction is D-sedoheptulose 7-phosphate + D-glyceraldehyde 3-phosphate = aldehydo-D-ribose 5-phosphate + D-xylulose 5-phosphate. Catalyzes the transfer of a two-carbon ketol group from a ketose donor to an aldose acceptor, via a covalent intermediate with the cofactor thiamine pyrophosphate. This is Transketolase (tkt-1) from Dictyostelium discoideum (Social amoeba).